The sequence spans 157 residues: Ribonuclease H (157 aa).

Residues 4–146 enclose the RNase H type-1 domain; sequence KRTEITIYTD…CDKLAVKASQ (143 aa). Mg(2+) contacts are provided by aspartate 13, glutamate 51, aspartate 73, and aspartate 138.

Belongs to the RNase H family. In terms of assembly, monomer. Mg(2+) is required as a cofactor.

It localises to the cytoplasm. It catalyses the reaction Endonucleolytic cleavage to 5'-phosphomonoester.. Functionally, endonuclease that specifically degrades the RNA of RNA-DNA hybrids. The chain is Ribonuclease H from Trichodesmium erythraeum (strain IMS101).